We begin with the raw amino-acid sequence, 329 residues long: DNA polymerase III subunit delta' (329 aa).

In terms of assembly, component of the DNA clamp loading complex consisting of tau(3):delta(1):delta'(1). The DNA polymerase III holoenzyme complex contains at least 10 different subunits organized into 3 functionally essential subassemblies: the Pol III core, the beta sliding clamp processivity factor and the clamp-loading complex. The Pol III core (subunits alpha, epsilon and theta) contains the polymerase and the 3'-5' exonuclease proofreading activities. The polymerase is tethered to the template via the dimeric beta sliding clamp processivity factor. The DNA clamp-loading complex assembles the beta sliding clamp onto the primed template and plays a central role in the organization and communication at the replication fork.

Its subcellular location is the cytoplasm. The protein localises to the nucleoid. The enzyme catalyses DNA(n) + a 2'-deoxyribonucleoside 5'-triphosphate = DNA(n+1) + diphosphate. In terms of biological role, DNA polymerase III is a complex, multichain enzyme responsible for most of the replicative synthesis in bacteria. The sequence is that of DNA polymerase III subunit delta' (holB) from Bacillus subtilis (strain 168).